A 505-amino-acid polypeptide reads, in one-letter code: Maturase K (505 aa).

This sequence belongs to the intron maturase 2 family. MatK subfamily.

The protein resides in the plastid. It localises to the chloroplast. In terms of biological role, usually encoded in the trnK tRNA gene intron. Probably assists in splicing its own and other chloroplast group II introns. The sequence is that of Maturase K from Ficus carica (Common fig).